A 321-amino-acid polypeptide reads, in one-letter code: NADPH-dependent codeinone reductase 1-2 (321 aa).

The NADPH site is built by Thr-27 and Asp-51. Catalysis depends on proton donor residues Tyr-56 and His-119. Residue His-119 coordinates substrate. NADPH-binding residues include Ser-165, Gln-187, Ser-214, Leu-216, Ser-264, and Arg-269. Positions 299–321 (SADFLLSPTGPFKTEEEFWDEKD) are disordered.

This sequence belongs to the aldo/keto reductase family. Latex secreting cells (laticifer cells). Expressed constitutively in all organs with highest levels in capsules. Restricted to the parietal region of sieve elements adjacent or proximal to laticifers in roots, stems, leaves and carpels.

The protein resides in the cytoplasm. Its subcellular location is the cytosol. It catalyses the reaction codeine + NADP(+) = codeinone + NADPH + H(+). The catalysed reaction is neopine + NADP(+) = neopinone + NADPH + H(+). It carries out the reaction morphine + NADP(+) = morphinone + NADPH + H(+). The enzyme catalyses neomorphine + NADP(+) = neomorphinone + NADPH + H(+). The protein operates within alkaloid biosynthesis; morphine biosynthesis. NADPH-dependent codeinone reductase involved in biosynthesis of morphinan-type benzylisoquinoline and opiate alkaloids natural products. Reduces codeinone to codeine in the penultimate step in morphine biosynthesis. Can use morphinone, hydrocodone and hydromorphone as substrate during reductive reaction with NADPH as cofactor, and morphine and dihydrocodeine as substrate during oxidative reaction with NADP as cofactor. Converts morphinone to morphine, and neomorphinone to neomorphine. Reduces irreversibly neopinone, a spontaneous isomer of codeinone, to neopine; in planta, neopine levels are limited to low levels. This chain is NADPH-dependent codeinone reductase 1-2, found in Papaver somniferum (Opium poppy).